The sequence spans 294 residues: UDP-3-O-acyl-N-acetylglucosamine deacetylase (294 aa).

Zn(2+)-binding residues include His75, His232, and Asp236. The active-site Proton donor is His259.

The protein belongs to the LpxC family. Zn(2+) is required as a cofactor.

It carries out the reaction a UDP-3-O-[(3R)-3-hydroxyacyl]-N-acetyl-alpha-D-glucosamine + H2O = a UDP-3-O-[(3R)-3-hydroxyacyl]-alpha-D-glucosamine + acetate. It functions in the pathway glycolipid biosynthesis; lipid IV(A) biosynthesis; lipid IV(A) from (3R)-3-hydroxytetradecanoyl-[acyl-carrier-protein] and UDP-N-acetyl-alpha-D-glucosamine: step 2/6. Functionally, catalyzes the hydrolysis of UDP-3-O-myristoyl-N-acetylglucosamine to form UDP-3-O-myristoylglucosamine and acetate, the committed step in lipid A biosynthesis. This Campylobacter jejuni subsp. jejuni serotype O:23/36 (strain 81-176) protein is UDP-3-O-acyl-N-acetylglucosamine deacetylase.